The chain runs to 385 residues: Methionine aminopeptidase 1 (385 aa).

Residues 6–59 form a C6H2-type zinc finger; sequence SRVCETEGCSSEAKLQCPTCIKLGIQGSYFCSQECFKGSWASHKLLHKKAKDDK. The Zn(2+) site is built by cysteine 9, cysteine 14, cysteine 22, cysteine 25, cysteine 36, cysteine 40, histidine 48, and histidine 52. Residue histidine 203 participates in a protein binding. Residues aspartate 220, aspartate 231, and histidine 294 each contribute to the Zn(2+) site. Histidine 301 lines the a protein pocket. Residues glutamate 327 and glutamate 358 each contribute to the Zn(2+) site.

Belongs to the peptidase M24A family. Methionine aminopeptidase type 1 subfamily. In terms of assembly, associates with the 60S ribosomal subunit of the 80S translational complex. Zn(2+) serves as cofactor. It depends on Co(2+) as a cofactor. Mn(2+) is required as a cofactor. The cofactor is Fe(2+).

It localises to the cytoplasm. It catalyses the reaction Release of N-terminal amino acids, preferentially methionine, from peptides and arylamides.. Cotranslationally removes the N-terminal methionine from nascent proteins. The N-terminal methionine is often cleaved when the second residue in the primary sequence is small and uncharged (Met-Ala-, Cys, Gly, Pro, Ser, Thr, or Val). This is Methionine aminopeptidase 1 (metap1) from Xenopus tropicalis (Western clawed frog).